The following is a 123-amino-acid chain: Glycine cleavage system H protein (123 aa).

In terms of domain architecture, Lipoyl-binding spans 22–104 (VATVGITSYA…FGAGWLVKVR (83 aa)). At Lys63 the chain carries N6-lipoyllysine.

The protein belongs to the GcvH family. In terms of assembly, the glycine cleavage system is composed of four proteins: P, T, L and H. It depends on (R)-lipoate as a cofactor.

The glycine cleavage system catalyzes the degradation of glycine. The H protein shuttles the methylamine group of glycine from the P protein to the T protein. The sequence is that of Glycine cleavage system H protein from Clavibacter sepedonicus (Clavibacter michiganensis subsp. sepedonicus).